The sequence spans 343 residues: SH2 domain-containing adapter protein D (343 aa).

The segment at M1–E176 is disordered. 2 stretches are compositionally biased toward basic and acidic residues: residues D29 to L40 and I73 to R82. Over residues E92 to D102 the composition is skewed to acidic residues. Positions R160–E176 are enriched in basic and acidic residues. Residues W225 to V320 form the SH2 domain. Positions S322–P343 are disordered.

Post-translationally, tyrosine phosphorylated by ABL. As to expression, specifically expressed in brain.

Its function is as follows. May function as an adapter protein. The polypeptide is SH2 domain-containing adapter protein D (Shd) (Mus musculus (Mouse)).